We begin with the raw amino-acid sequence, 150 residues long: Kirola (150 aa).

An N-acetylmethionine modification is found at M1.

It belongs to the MLP family. As to quaternary structure, monomer. Post-translationally, the N-terminus is blocked.

In Actinidia deliciosa (Kiwi), this protein is Kirola.